Consider the following 185-residue polypeptide: Acireductone dioxygenase (185 aa).

Fe(2+)-binding residues include histidine 96, histidine 98, glutamate 102, and histidine 140. Ni(2+) contacts are provided by histidine 96, histidine 98, glutamate 102, and histidine 140.

It belongs to the acireductone dioxygenase (ARD) family. Monomer. The cofactor is Fe(2+). It depends on Ni(2+) as a cofactor.

It catalyses the reaction 1,2-dihydroxy-5-(methylsulfanyl)pent-1-en-3-one + O2 = 3-(methylsulfanyl)propanoate + CO + formate + 2 H(+). The catalysed reaction is 1,2-dihydroxy-5-(methylsulfanyl)pent-1-en-3-one + O2 = 4-methylsulfanyl-2-oxobutanoate + formate + 2 H(+). It participates in amino-acid biosynthesis; L-methionine biosynthesis via salvage pathway; L-methionine from S-methyl-5-thio-alpha-D-ribose 1-phosphate: step 5/6. Functionally, catalyzes 2 different reactions between oxygen and the acireductone 1,2-dihydroxy-3-keto-5-methylthiopentene (DHK-MTPene) depending upon the metal bound in the active site. Fe-containing acireductone dioxygenase (Fe-ARD) produces formate and 2-keto-4-methylthiobutyrate (KMTB), the alpha-ketoacid precursor of methionine in the methionine recycle pathway. Ni-containing acireductone dioxygenase (Ni-ARD) produces methylthiopropionate, carbon monoxide and formate, and does not lie on the methionine recycle pathway. The chain is Acireductone dioxygenase from Hahella chejuensis (strain KCTC 2396).